The primary structure comprises 572 residues: Glutamate--tRNA ligase (572 aa).

The 'HIGH' region motif lies at 107 to 117; it reads PNPDGAFHLGN.

Belongs to the class-I aminoacyl-tRNA synthetase family. Glutamate--tRNA ligase type 2 subfamily.

It is found in the cytoplasm. The catalysed reaction is tRNA(Glu) + L-glutamate + ATP = L-glutamyl-tRNA(Glu) + AMP + diphosphate. Catalyzes the attachment of glutamate to tRNA(Glu) in a two-step reaction: glutamate is first activated by ATP to form Glu-AMP and then transferred to the acceptor end of tRNA(Glu). The chain is Glutamate--tRNA ligase from Pyrococcus furiosus (strain ATCC 43587 / DSM 3638 / JCM 8422 / Vc1).